Here is a 350-residue protein sequence, read N- to C-terminus: Bifunctional methylenetetrahydrofolate dehydrogenase/cyclohydrolase, mitochondrial (350 aa).

The N-terminal 35 residues, 1–35 (MAATSLMSALAARLLQPAHSCSLRLRPFHLAAVRN), are a transit peptide targeting the mitochondrion. N6-acetyllysine; alternate is present on lysine 50. Residue lysine 50 forms a Glycyl lysine isopeptide (Lys-Gly) (interchain with G-Cter in SUMO2); alternate linkage. Residues 84–88 (YVLNK) and 131–133 (VQL) each bind substrate. Residues 200–202 (GRS) and arginine 233 contribute to the NAD(+) site. Residue 309 to 313 (PGGVG) participates in substrate binding.

Belongs to the tetrahydrofolate dehydrogenase/cyclohydrolase family. In terms of assembly, homodimer. Mg(2+) serves as cofactor.

It localises to the mitochondrion. It carries out the reaction (6R)-5,10-methylene-5,6,7,8-tetrahydrofolate + NAD(+) = (6R)-5,10-methenyltetrahydrofolate + NADH. It catalyses the reaction (6R)-5,10-methenyltetrahydrofolate + H2O = (6R)-10-formyltetrahydrofolate + H(+). Functionally, although its dehydrogenase activity is NAD-specific, it can also utilize NADP at a reduced efficiency. The polypeptide is Bifunctional methylenetetrahydrofolate dehydrogenase/cyclohydrolase, mitochondrial (MTHFD2) (Homo sapiens (Human)).